The primary structure comprises 309 residues: tRNA uridine(34) hydroxylase (309 aa).

Residues 129 to 223 (SEPGTIVIDT…YLEEVPAEQS (95 aa)) enclose the Rhodanese domain. C183 serves as the catalytic Cysteine persulfide intermediate. Residues 288–309 (YAERQRQVELAQARGKRPHIGS) form a disordered region.

This sequence belongs to the TrhO family.

The catalysed reaction is uridine(34) in tRNA + AH2 + O2 = 5-hydroxyuridine(34) in tRNA + A + H2O. Functionally, catalyzes oxygen-dependent 5-hydroxyuridine (ho5U) modification at position 34 in tRNAs. The protein is tRNA uridine(34) hydroxylase of Mesorhizobium japonicum (strain LMG 29417 / CECT 9101 / MAFF 303099) (Mesorhizobium loti (strain MAFF 303099)).